Consider the following 306-residue polypeptide: Beta-lactamase 1 (306 aa).

An N-terminal signal peptide occupies residues 1-43; it reads MKNKKMLKIGMCVGILGLSITSLVTFTGGALQVEAKEKTGQVK. S89 functions as the Acyl-ester intermediate in the catalytic mechanism. E185 functions as the Proton acceptor in the catalytic mechanism. 251 to 253 serves as a coordination point for substrate; sequence KSG.

Belongs to the class-A beta-lactamase family.

It localises to the secreted. The enzyme catalyses a beta-lactam + H2O = a substituted beta-amino acid. In terms of biological role, acts preferentially on penicillins. The protein is Beta-lactamase 1 (penPC) of Bacillus cereus.